A 510-amino-acid chain; its full sequence is NAD(P)H-quinone oxidoreductase subunit 2 A, chloroplastic (510 aa).

Helical transmembrane passes span 31–51 (LIFP…IDLT), 57–77 (IPWL…ALLF), 99–119 (IFQF…VEYI), 124–144 (MAIT…MFLC), 149–169 (LITI…LSGY), 184–204 (LLMG…LYGL), 229–249 (ISIA…LAPF), 261–281 (PTPV…ALAT), 295–315 (WHLL…LIAI), 323–343 (MLAY…IVGD), 354–374 (YMLF…LFGL), 395–415 (ALSL…AGFF), 418–438 (LYLF…IGLL), and 484–504 (MIVC…IIAI).

The protein belongs to the complex I subunit 2 family. As to quaternary structure, NDH is composed of at least 16 different subunits, 5 of which are encoded in the nucleus.

Its subcellular location is the plastid. It localises to the chloroplast thylakoid membrane. The enzyme catalyses a plastoquinone + NADH + (n+1) H(+)(in) = a plastoquinol + NAD(+) + n H(+)(out). It catalyses the reaction a plastoquinone + NADPH + (n+1) H(+)(in) = a plastoquinol + NADP(+) + n H(+)(out). NDH shuttles electrons from NAD(P)H:plastoquinone, via FMN and iron-sulfur (Fe-S) centers, to quinones in the photosynthetic chain and possibly in a chloroplast respiratory chain. The immediate electron acceptor for the enzyme in this species is believed to be plastoquinone. Couples the redox reaction to proton translocation, and thus conserves the redox energy in a proton gradient. This Nicotiana tabacum (Common tobacco) protein is NAD(P)H-quinone oxidoreductase subunit 2 A, chloroplastic.